Here is a 64-residue protein sequence, read N- to C-terminus: DNA gyrase inhibitor YacG (64 aa).

Zn(2+) contacts are provided by Cys9, Cys12, Cys28, and Cys32.

The protein belongs to the DNA gyrase inhibitor YacG family. In terms of assembly, interacts with GyrB. Zn(2+) is required as a cofactor.

Functionally, inhibits all the catalytic activities of DNA gyrase by preventing its interaction with DNA. Acts by binding directly to the C-terminal domain of GyrB, which probably disrupts DNA binding by the gyrase. The sequence is that of DNA gyrase inhibitor YacG from Enterobacter sp. (strain 638).